Consider the following 396-residue polypeptide: Alpha-galactosidase 2 (396 aa).

Residues 1-25 (MVLLSFSLRFIAFTLTITLTQIADG) form the signal peptide. 2 disulfides stabilise this stretch: Cys52-Cys84 and Cys132-Cys163. The N-linked (GlcNAc...) asparagine glycan is linked to Asn55. Residues 82–83 (DD) and Lys159 contribute to the substrate site. Asp161 (nucleophile) is an active-site residue. Residues 194 to 198 (EWGQE), Arg212, and Asp216 each bind substrate. The active-site Proton donor is Asp216. 2 N-linked (GlcNAc...) asparagine glycosylation sites follow: Asn343 and Asn354.

The protein belongs to the glycosyl hydrolase 27 family. As to quaternary structure, homodimer.

Its subcellular location is the secreted. The protein localises to the cell wall. It localises to the extracellular space. It is found in the apoplast. The catalysed reaction is Hydrolysis of terminal, non-reducing alpha-D-galactose residues in alpha-D-galactosides, including galactose oligosaccharides, galactomannans and galactolipids.. Functionally, may regulate leaf (and possibly other organ) development by functioning in cell wall loosening and cell wall expansion. The chain is Alpha-galactosidase 2 from Arabidopsis thaliana (Mouse-ear cress).